The primary structure comprises 702 residues: Sodium/hydrogen exchanger 6 (702 aa).

Transmembrane regions (helical) follow at residues 72-92, 104-124, 177-197, 212-232, 253-273, 279-299, 325-345, 373-393, 415-435, 437-457, 480-500, and 516-536; these read SANL…IWLF, GLAM…IHVP, VTFD…FYAG, ILAY…SIMY, CLLF…AIFH, VELY…AIVL, IGIF…TGVV, TFLL…FCGI, FELL…LTLF, FQNH…IFLG, NFQH…ALAI, and LLIV…MLSC.

It belongs to the monovalent cation:proton antiporter 1 (CPA1) transporter (TC 2.A.36) family. In terms of assembly, homodimer. Interacts with RACK1; regulates the distribution of SLC9A6 between endosomes and the plasma membrane. Post-translationally, ubiquitinated (in vitro). In terms of processing, glycosylated.

The protein localises to the endosome membrane. It is found in the recycling endosome membrane. Its subcellular location is the early endosome membrane. It localises to the late endosome membrane. The protein resides in the cell membrane. It catalyses the reaction Na(+)(in) + H(+)(out) = Na(+)(out) + H(+)(in). The enzyme catalyses K(+)(in) + H(+)(out) = K(+)(out) + H(+)(in). Endosomal Na(+), K(+)/H(+) antiporter. Mediates the electroneutral exchange of endosomal luminal H(+) for a cytosolic Na(+) or K(+). By facilitating proton efflux, SLC9A6 counteracts the acidity generated by vacuolar (V)-ATPase, thereby limiting luminal acidification. Responsible for alkalizing and maintaining the endosomal pH, and consequently in, e.g., endosome maturation and trafficking of recycling endosomal cargo. Plays a critical role during neurodevelopment by regulating synaptic development and plasticity. Implicated in the maintenance of cell polarity in a manner that is dependent on its ability to modulate intravesicular pH. Regulates intracelular pH in some specialized cells, osteoclasts and stereocilia where this transporter localizes to the plasma membrane. This chain is Sodium/hydrogen exchanger 6 (Slc9a6), found in Mus musculus (Mouse).